Consider the following 745-residue polypeptide: UPF0508 protein YJR030C (745 aa).

It belongs to the UPF0508 family.

The polypeptide is UPF0508 protein YJR030C (Saccharomyces cerevisiae (strain ATCC 204508 / S288c) (Baker's yeast)).